The sequence spans 579 residues: Folliculin (579 aa).

The disordered stretch occupies residues 32–82 (GAGSGDSPGQVEQAEEEEGGIQMSSRVRAHSPAEGASTDSSSPGPKKSDMC). 2 positions are modified to phosphoserine: Ser62 and Ser73. A uDENN FLCN/SMCR8-type domain is found at 86–242 (RSLAVGHPGY…RNGNAARSLT (157 aa)). Residues 287-310 (EKLADLEEESESWDNSEAEEEEKA) are a coiled coil. Residues 294 to 308 (EESESWDNSEAEEEE) show a composition bias toward acidic residues. A disordered region spans residues 294–320 (EESESWDNSEAEEEEKAPATAEGAEGR). Phosphoserine occurs at positions 302, 406, 537, 542, and 571. A cDENN FLCN/SMCR8-type domain is found at 339–491 (QPPKLSVFKS…ILNKMEAALT (153 aa)). In terms of domain architecture, dDENN FLCN/SMCR8-type spans 493–558 (QNLSVDVVDQ…LLKFWMTGLS (66 aa)).

Belongs to the folliculin family. As to quaternary structure, interacts (via C-terminus) with FNIP1 or FNIP2 (via C-terminus). Component of the lysosomal folliculin complex (LFC), composed of FLCN, FNIP1 (or FNIP2), RagA/RRAGA or RagB/RRAGB GDP-bound, RagC/RRAGC or RagD/RRAGD GTP-bound, and Ragulator. Interaction with FNIP1 or FNIP2 mediates indirect interaction with the PRKAA1, PRKAB1 and PRKAG1 subunits of 5'-AMP-activated protein kinase (AMPK). Interacts with HSP90AA1 in the presence of FNIP1. Interacts with HSP70, STUB1, CDC37, AHSA1, CCT2, STIP1, PTGES3 and PPP5C. Interacts with GABARAP; interaction takes place in the presence of FNIP1 and/or FNIP2. Interacts with RILP; the interaction is direct and promotes association between RILP and RAB34. Interacts with KIF3A and KIF3B. Interacts with lactate dehydrogenase LDHA, but not LDHB; the interaction is direct, may preferentially bind LDHA dimers rather than tetramers, and regulates LDHA activity, acting as an uncompetitive inhibitor. Phosphorylation by ULK1 modulates the interaction with GABARAP and is required to regulate autophagy. Expressed in kidney.

It is found in the lysosome membrane. It localises to the cytoplasm. The protein localises to the cytosol. The protein resides in the cell projection. Its subcellular location is the cilium. It is found in the cytoskeleton. It localises to the microtubule organizing center. The protein localises to the centrosome. The protein resides in the spindle. Its subcellular location is the nucleus. Its activity is regulated as follows. GTPase-activating activity is inhibited in the folliculin complex (LFC), which stabilizes the GDP-bound state of RagA/RRAGA (or RagB/RRAGB), because Arg-164 is located far from the RagC/RRAGC or RagD/RRAGD nucleotide pocket. Disassembly of the LFC complex upon amino acid restimulation liberates the GTPase-activating activity. Multi-functional protein, involved in both the cellular response to amino acid availability and in the regulation of glycolysis. GTPase-activating protein that plays a key role in the cellular response to amino acid availability through regulation of the non-canonical mTORC1 signaling cascade controlling the MiT/TFE factors TFEB and TFE3. Activates mTORC1 by acting as a GTPase-activating protein: specifically stimulates GTP hydrolysis by RagC/RRAGC or RagD/RRAGD, promoting the conversion to the GDP-bound state of RagC/RRAGC or RagD/RRAGD, and thereby activating the kinase activity of mTORC1. The GTPase-activating activity is inhibited during starvation and activated in presence of nutrients. Acts as a key component for non-canonical mTORC1-dependent control of the MiT/TFE factors TFEB and TFE3, while it is not involved in mTORC1-dependent phosphorylation of canonical RPS6KB1/S6K1 and EIF4EBP1/4E-BP1. In low-amino acid conditions, the lysosomal folliculin complex (LFC) is formed on the membrane of lysosomes, which inhibits the GTPase-activating activity of FLCN, inactivates mTORC1 and maximizes nuclear translocation of TFEB and TFE3. Upon amino acid restimulation, RagA/RRAGA (or RagB/RRAGB) nucleotide exchange promotes disassembly of the LFC complex and liberates the GTPase-activating activity of FLCN, leading to activation of mTORC1 and subsequent cytoplasmic retention of TFEB and TFE3. Indirectly acts as a positive regulator of Wnt signaling by promoting mTOR-dependent cytoplasmic retention of MiT/TFE factor TFE3. Required for the exit of hematopoietic stem cell from pluripotency by promoting mTOR-dependent cytoplasmic retention of TFE3, thereby increasing Wnt signaling. Involved in the control of embryonic stem cells differentiation; together with LAMTOR1 it is necessary to recruit and activate RagC/RRAGC and RagD/RRAGD at the lysosomes, and to induce exit of embryonic stem cells from pluripotency via non-canonical, mTOR-independent TFE3 inactivation. Acts as an inhibitor of browning of adipose tissue by regulating mTOR-dependent cytoplasmic retention of TFE3. In response to flow stress, regulates STK11/LKB1 accumulation and mTORC1 activation through primary cilia: may act by recruiting STK11/LKB1 to primary cilia for activation of AMPK resided at basal bodies, causing mTORC1 down-regulation. Together with FNIP1 and/or FNIP2, regulates autophagy: following phosphorylation by ULK1, interacts with GABARAP and promotes autophagy. Required for starvation-induced perinuclear clustering of lysosomes by promoting association of RILP with its effector RAB34. Regulates glycolysis by binding to lactate dehydrogenase LDHA, acting as an uncompetitive inhibitor. The polypeptide is Folliculin (Rattus norvegicus (Rat)).